Reading from the N-terminus, the 338-residue chain is Anthocyanidin reductase ((2S)-flavan-3-ol-forming) (338 aa).

NADP(+) is bound by residues Thr-18–Val-21, Lys-48, Val-87–Pro-90, and Tyr-168.

It belongs to the NAD(P)-dependent epimerase/dehydratase family. Dihydroflavonol-4-reductase subfamily. As to expression, expressed in leaves and grape berries.

It carries out the reaction a (2S,3R)-flavan-3-ol + 2 NADP(+) = an anthocyanidin with a 3-hydroxy group + 2 NADPH + 2 H(+). The catalysed reaction is a (2S,3S)-flavan-3-ol + 2 NADP(+) = an anthocyanidin with a 3-hydroxy group + 2 NADPH + 2 H(+). The protein operates within secondary metabolite biosynthesis; flavonoid biosynthesis. Produces the terminal flavan-3-ol monomers required for the formation of proanthocyanidins or condensed tannins in leaves and flowers, as well as in the skin and seeds of developing berries. Behaves as a reductase and as a C-3 epimerase. Catalyzes the double reduction of anthocyanidins, producing a mixture of (2S,3S)- and (2S,3R)-flavan-3-ols. The enzyme catalyzes sequential hydride transfers to C-2 and C-4, respectively and epimerization at C-3 is achieved by tautomerization that occurs between the two hydride transfers. Converts cyanidin, pelargonidin and delphinidin into catechin and epicatechin, afzelechin and epiafzelechin, and gallocatechin and epigallocatechin respectively. This chain is Anthocyanidin reductase ((2S)-flavan-3-ol-forming), found in Vitis vinifera (Grape).